Here is a 350-residue protein sequence, read N- to C-terminus: Protein RecA (350 aa).

80-87 (GPESSGKT) contributes to the ATP binding site.

This sequence belongs to the RecA family.

The protein localises to the cytoplasm. In terms of biological role, can catalyze the hydrolysis of ATP in the presence of single-stranded DNA, the ATP-dependent uptake of single-stranded DNA by duplex DNA, and the ATP-dependent hybridization of homologous single-stranded DNAs. It interacts with LexA causing its activation and leading to its autocatalytic cleavage. The protein is Protein RecA of Chlorobium limicola (strain DSM 245 / NBRC 103803 / 6330).